We begin with the raw amino-acid sequence, 132 residues long: Small ribosomal subunit protein uS11 (132 aa).

The protein belongs to the universal ribosomal protein uS11 family. As to quaternary structure, part of the 30S ribosomal subunit. Interacts with proteins S7 and S18. Binds to IF-3.

Located on the platform of the 30S subunit, it bridges several disparate RNA helices of the 16S rRNA. Forms part of the Shine-Dalgarno cleft in the 70S ribosome. The sequence is that of Small ribosomal subunit protein uS11 from Legionella pneumophila (strain Corby).